The following is a 253-amino-acid chain: Snake venom serine protease homolog HS120 (253 aa).

The signal sequence occupies residues 1-18; that stretch reads MVLIRVIANLLILQLSYA. A propeptide spanning residues 19–24 is cleaved from the precursor; the sequence is QKSSEL. One can recognise a Peptidase S1 domain in the interval 25–244; it reads VIGGDECNIN…YLPWIQSIIA (220 aa). 6 cysteine pairs are disulfide-bonded: C31–C158, C49–C65, C98–C251, C137–C205, C169–C184, and C195–C220. N-linked (GlcNAc...) asparagine glycosylation is found at N116 and N165.

Belongs to the peptidase S1 family. Snake venom subfamily. Expressed by the venom gland.

The protein localises to the secreted. Its function is as follows. Snake venom serine protease homolog that may act in the hemostasis system of the prey. In Bothrops jararaca (Jararaca), this protein is Snake venom serine protease homolog HS120.